Here is a 426-residue protein sequence, read N- to C-terminus: Cytochrome c biogenesis protein CcsB (426 aa).

The next 3 helical transmembrane spans lie at 11-31, 69-89, and 159-179; these read LRVAIVLLFLIALASAVGTAI, SVWFLSLLAWLGLALILCSWR, and VGPLLVHTGLILLMLGAVWGV.

The protein belongs to the Ccs1/CcsB family. May interact with CcsA.

It localises to the cellular thylakoid membrane. In terms of biological role, required during biogenesis of c-type cytochromes (cytochrome c6 and cytochrome f) at the step of heme attachment. This is Cytochrome c biogenesis protein CcsB from Synechococcus sp. (strain CC9902).